The chain runs to 486 residues: Probable glucan endo-1,3-beta-glucosidase eglC (486 aa).

An N-terminal signal peptide occupies residues 1–18; that stretch reads MQLTQLLALALSLATSEA. Asparagine 84 carries an N-linked (GlcNAc...) asparagine glycan. Glutamate 128 functions as the Proton donor in the catalytic mechanism. Asparagine 183 carries N-linked (GlcNAc...) asparagine glycosylation. The active-site Nucleophile is glutamate 239. 4 N-linked (GlcNAc...) asparagine glycosylation sites follow: asparagine 315, asparagine 386, asparagine 396, and asparagine 404. A disordered region spans residues 330–458; that stretch reads AAAGGVAGGS…SSGAASPSST (129 aa). Low complexity-rich tracts occupy residues 341 to 404 and 413 to 424; these read GSAS…HGSN and SVSNVSPSKSSS. Residues 430 to 442 are compositionally biased toward polar residues; it reads AATSMGASPSSVG. Positions 445–458 are enriched in low complexity; sequence GPSKSSGAASPSST. Glycine 463 is lipidated: GPI-anchor amidated glycine. The propeptide at 464–486 is removed in mature form; sequence AATSVSAPVVHVVLLALMMVIAA.

The protein belongs to the glycosyl hydrolase 17 family. In terms of processing, the GPI-anchor is attached to the protein in the endoplasmic reticulum and serves to target the protein to the cell surface. There, the glucosamine-inositol phospholipid moiety is cleaved off and the GPI-modified mannoprotein is covalently attached via its lipidless GPI glycan remnant to the 1,6-beta-glucan of the outer cell wall layer.

The protein resides in the cell membrane. Its subcellular location is the secreted. It localises to the cell wall. It carries out the reaction Hydrolysis of (1-&gt;3)-beta-D-glucosidic linkages in (1-&gt;3)-beta-D-glucans.. Glucanases play a role in cell expansion during growth, in cell-cell fusion during mating, and in spore release during sporulation. This enzyme may be involved in beta-glucan degradation and also function biosynthetically as a transglycosylase. This is Probable glucan endo-1,3-beta-glucosidase eglC (eglC) from Aspergillus terreus (strain NIH 2624 / FGSC A1156).